The primary structure comprises 310 residues: Cytosolic Fe-S cluster assembly factor NUBP1 homolog (310 aa).

Residues Cys12, Cys26, Cys29, and Cys35 each coordinate [4Fe-4S] cluster. 66 to 73 lines the ATP pocket; it reads GKGGVGKS. 2 residues coordinate [4Fe-4S] cluster: Cys240 and Cys243.

Belongs to the Mrp/NBP35 ATP-binding proteins family. NUBP1/NBP35 subfamily. In terms of assembly, heterotetramer of 2 NUBP1 and 2 NUBP2 chains. It depends on [4Fe-4S] cluster as a cofactor.

The protein resides in the cytoplasm. In terms of biological role, component of the cytosolic iron-sulfur (Fe/S) protein assembly (CIA) machinery. Required for maturation of extramitochondrial Fe-S proteins. The NUBP1-NUBP2 heterotetramer forms a Fe-S scaffold complex, mediating the de novo assembly of an Fe-S cluster and its transfer to target apoproteins. The chain is Cytosolic Fe-S cluster assembly factor NUBP1 homolog from Brugia malayi (Filarial nematode worm).